Here is a 1320-residue protein sequence, read N- to C-terminus: Mediator of RNA polymerase II transcription subunit 15 (1320 aa).

Residues Gln-235–Pro-244 are compositionally biased toward polar residues. Disordered stretches follow at residues Gln-235–Gln-283, Lys-372–Ala-398, Gln-540–Thr-688, Gln-702–Gln-791, and Asp-1233–Lys-1270. 3 stretches are compositionally biased toward low complexity: residues Gln-245 to Gln-283, Met-375 to Ala-398, and Gln-540 to Leu-554. Over residues Ala-555–Ala-587 the composition is skewed to polar residues. Low complexity-rich tracts occupy residues Leu-588–Gln-624, Gln-634–Thr-688, and Gln-702–Thr-780.

The protein belongs to the Mediator complex subunit 15 family. Component of the Mediator complex.

It is found in the nucleus. Functionally, component of the Mediator complex, a coactivator involved in regulated gene transcription of nearly all RNA polymerase II-dependent genes. Mediator functions as a bridge to convey information from gene-specific regulatory proteins to the basal RNA polymerase II transcription machinery. Mediator is recruited to promoters by direct interactions with regulatory proteins and serves as a scaffold for the assembly of a functional preinitiation complex with RNA polymerase II and the general transcription factors. The chain is Mediator of RNA polymerase II transcription subunit 15 (GAL11) from Eremothecium gossypii (strain ATCC 10895 / CBS 109.51 / FGSC 9923 / NRRL Y-1056) (Yeast).